The following is a 65-amino-acid chain: Neurotoxin BmK AGAP-SYPU2 (65 aa).

The region spanning 2 to 64 is the LCN-type CS-alpha/beta domain; sequence KDGYIVDDKN…VPIRVPGRCN (63 aa). 4 disulfides stabilise this stretch: C12-C63, C16-C36, C22-C46, and C26-C48.

In terms of tissue distribution, expressed by the venom gland.

It localises to the secreted. In terms of biological role, alpha toxins bind voltage-independently at site-3 of sodium channels and inhibit the inactivation of the activated channels, thereby blocking neuronal transmission. In vivo, shows analgesic activity (ED(50) is 1.42 mg/kg) and antitumor activity against Ehrlich ascites tumor and S-180 fibrosarcoma models. The chain is Neurotoxin BmK AGAP-SYPU2 from Olivierus martensii (Manchurian scorpion).